Reading from the N-terminus, the 554-residue chain is Valerianol synthase TPS1E (554 aa).

Positions 307 and 311 each coordinate Mg(2+). Positions 326–330 (VQRWD) match the DDXXD motif motif. Positions 452, 456, and 460 each coordinate Mg(2+).

It belongs to the terpene synthase family. Mg(2+) is required as a cofactor.

The enzyme catalyses (2E,6E)-farnesyl diphosphate + H2O = valerianol + diphosphate. It functions in the pathway secondary metabolite biosynthesis; terpenoid biosynthesis. Its function is as follows. Terpene synthase that catalyzes the biosynthesis of the terpene valerianol, which is a volatile compound of floral scent. This chain is Valerianol synthase TPS1E, found in Camellia hiemalis (Camellia).